Here is a 102-residue protein sequence, read N- to C-terminus: Glutaredoxin (102 aa).

Positions 3–102 (MTKTKELVSS…VPLLTEAGAV (100 aa)) constitute a Glutaredoxin domain. A disulfide bridge connects residues C23 and C26.

This sequence belongs to the glutaredoxin family. CPYC subfamily.

The protein localises to the cytoplasm. In terms of biological role, has a glutathione-disulfide oxidoreductase activity in the presence of NADPH and glutathione reductase. Reduces low molecular weight disulfides and proteins. In Ricinus communis (Castor bean), this protein is Glutaredoxin.